A 363-amino-acid chain; its full sequence is Trichocyst matrix protein T4-A (363 aa).

The first 17 residues, 1–17 (MARSLTILAIVFAVATA), serve as a signal peptide directing secretion. Positions 18-52 (RVTKSESPKEILAQVNKDSFGNSILSVLQLQLATG) are excised as a propeptide. Residues 85-119 (VAFEKIIADLEQEIAYHQTQIVALSNLRDSTTEAL) are a coiled coil. Positions 190–221 (RFEKVQAKLMESKHALFKPLINALTQLASKVD) are excised as a propeptide. Residues 244–352 (ASLLATEERQ…EVLTQKLSAA (109 aa)) are a coiled coil.

It belongs to the TMP family. Post-translationally, two components are produced by post-translational processing from the precursor peptide.

The protein resides in the trichocyst. Functionally, structural protein that crystallize inside the trichocyst matrix. The protein is Trichocyst matrix protein T4-A (T4A) of Paramecium tetraurelia.